The primary structure comprises 294 residues: Nucleotide-binding protein Cbei_4857 (294 aa).

G8–T15 lines the ATP pocket. D59 to G62 contacts GTP.

The protein belongs to the RapZ-like family.

Functionally, displays ATPase and GTPase activities. The polypeptide is Nucleotide-binding protein Cbei_4857 (Clostridium beijerinckii (strain ATCC 51743 / NCIMB 8052) (Clostridium acetobutylicum)).